Reading from the N-terminus, the 808-residue chain is Quinoprotein glucose dehydrogenase (808 aa).

A signal peptide spans 1-33; sequence MSTTSRPGLWALITAAVFALCGAILTVGGAWVA. A run of 4 helical transmembrane segments spans residues 35-54, 59-76, 94-108, and 123-138; these read IGGP…TAFL, NPAA…TVIW, IVII…PFVS, and GAVG…SLFT. The Proton acceptor role is filled by aspartate 470. A disordered region spans residues 514-545; that stretch reads VPAPETPVPQGAAPGDHTSPTQPMSQLTLRPK. The span at 531–541 shows a compositional bias: polar residues; that stretch reads TSPTQPMSQLT.

It belongs to the bacterial PQQ dehydrogenase family. The cofactor is pyrroloquinoline quinone.

It is found in the cell inner membrane. It catalyses the reaction a ubiquinone + D-glucose = D-glucono-1,5-lactone + a ubiquinol. This Gluconobacter oxydans (strain 621H) (Gluconobacter suboxydans) protein is Quinoprotein glucose dehydrogenase (gdh).